Here is a 1037-residue protein sequence, read N- to C-terminus: Glycine dehydrogenase (decarboxylating) A, mitochondrial (1037 aa).

Residues 1–66 (MERARRLANK…LNGFGSQVRT (66 aa)) constitute a mitochondrion transit peptide. N6-(pyridoxal phosphate)lysine is present on Lys-773.

The protein belongs to the GcvP family. As to quaternary structure, homodimer. The glycine cleavage system is composed of four proteins: P, T, L and H. Pyridoxal 5'-phosphate serves as cofactor. As to expression, expressed in leaves, stems and roots.

It is found in the mitochondrion. It catalyses the reaction N(6)-[(R)-lipoyl]-L-lysyl-[glycine-cleavage complex H protein] + glycine + H(+) = N(6)-[(R)-S(8)-aminomethyldihydrolipoyl]-L-lysyl-[glycine-cleavage complex H protein] + CO2. Its function is as follows. The glycine cleavage system catalyzes the degradation of glycine. The P protein binds the alpha-amino group of glycine through its pyridoxal phosphate cofactor; CO(2) is released and the remaining methylamine moiety is then transferred to the lipoamide cofactor of the H protein. The protein is Glycine dehydrogenase (decarboxylating) A, mitochondrial (GDCSPA) of Flaveria pringlei.